The sequence spans 178 residues: MFEATTILGYKGDGIAVIGGDGQVTFGNTVLKGNATKIRTLYNGQILAGFAGSTADAFNLFDMFEKILENKKGDLLKSVIEFSKEWRKDRYLRRLEAMMIVLNTKHIFILSGTGDVVEPEDGKIAAIGSGGNFALSAARALDKHANLDAKTLVEESLKIAGELCIYTNTNIKLLTLEE.

Residue T5 is part of the active site. Na(+) is bound by residues G161, C164, and T167.

This sequence belongs to the peptidase T1B family. HslV subfamily. In terms of assembly, a double ring-shaped homohexamer of HslV is capped on each side by a ring-shaped HslU homohexamer. The assembly of the HslU/HslV complex is dependent on binding of ATP.

The protein resides in the cytoplasm. The enzyme catalyses ATP-dependent cleavage of peptide bonds with broad specificity.. Its activity is regulated as follows. Allosterically activated by HslU binding. In terms of biological role, protease subunit of a proteasome-like degradation complex believed to be a general protein degrading machinery. In Nitratiruptor sp. (strain SB155-2), this protein is ATP-dependent protease subunit HslV.